A 196-amino-acid chain; its full sequence is Large ribosomal subunit protein uL14my (196 aa).

The transit peptide at 1-62 (MATALASKLS…TILKCVDNSC (62 aa)) directs the protein to the mitochondrion. Residues 148–175 (EKKGQNNSHGSKRKMEYNQPTGTRVFGP) form a disordered region.

This sequence belongs to the universal ribosomal protein uL14 family. In terms of assembly, part of the mitochondrial 50S ribosomal subunit. As to expression, mostly expressed in pistils and inflorescences, including floral organs and meristems, and, to a lower extent, in leaves.

It is found in the mitochondrion. Its function is as follows. Binds to 23S rRNA in mitochondrion. Required for the formation of the proximal region of the ovule primordium during floral organogenesis, thus participating in patterning and growth of ovule. Also regulates the initiation and/or maintenance of integument and embryo sac ontogenesis. Prevents inappropriate cell death in the young ovule. This Arabidopsis thaliana (Mouse-ear cress) protein is Large ribosomal subunit protein uL14my (HLL).